Here is a 156-residue protein sequence, read N- to C-terminus: EPIDERMAL PATTERNING FACTOR-like protein 6 (156 aa).

The signal sequence occupies residues 1 to 47 (MGFERTSSSLSLLSSSLPSSLQPSENTRAKFSLFYLLLLFFVLCVIA). Intrachain disulfides connect Cys-113–Cys-147, Cys-117–Cys-123, and Cys-120–Cys-149.

It belongs to the plant cysteine rich small secretory peptide family. Epidermal patterning factor subfamily. Interacts with ERECTA. In terms of tissue distribution, expressed in the internal layers of the root, hypocotyl and stems, and in the midrib of developing rosette leaves. Detected in a ring of cells surrounding the vascular elements. Expressed in developing stems soon after bolting, in inflorescence stems, near the root apex and in the chalazal region of ovules. Not found in cotyledons or in stomatal precursors or stomata.

The protein resides in the secreted. Its function is as follows. Acts primarily as positive regulator of inflorescence growth. Endodermal expression is sufficient for proper inflorescence architecture. Redundantly involved with EPFL4 in procambial development regulation. Also acts as tissue-specific regulator of epidermal pattern. Controls stomatal patterning by repressing stomatal production. TMM (AC Q9SSD1) functions to dampen or block CHAL signaling. Not processed by SDD1 (AC O64495). Acts as growth-regulatory ligand for ERECTA family receptors. In Arabidopsis thaliana (Mouse-ear cress), this protein is EPIDERMAL PATTERNING FACTOR-like protein 6.